A 307-amino-acid polypeptide reads, in one-letter code: 4-diphosphocytidyl-2-C-methyl-D-erythritol kinase (307 aa).

K16 is a catalytic residue. 101 to 111 (PVAGGMAGGSA) is a binding site for ATP. The active site involves D143.

Belongs to the GHMP kinase family. IspE subfamily.

The enzyme catalyses 4-CDP-2-C-methyl-D-erythritol + ATP = 4-CDP-2-C-methyl-D-erythritol 2-phosphate + ADP + H(+). It functions in the pathway isoprenoid biosynthesis; isopentenyl diphosphate biosynthesis via DXP pathway; isopentenyl diphosphate from 1-deoxy-D-xylulose 5-phosphate: step 3/6. Its function is as follows. Catalyzes the phosphorylation of the position 2 hydroxy group of 4-diphosphocytidyl-2C-methyl-D-erythritol. The polypeptide is 4-diphosphocytidyl-2-C-methyl-D-erythritol kinase (Nocardia farcinica (strain IFM 10152)).